The primary structure comprises 339 residues: MLELFFEYIFPLIIIALKVVAITTPLILCVAYLTYAERRVIGLMQLRRGPNVVGPFGLLQPIADAVKLLFKEPIIPTNSDKILFILAPMITFILSLIGWAVIPFAKGVVLADINVGVLYILAISSLSVYGIIIAGWASNSKYAFLGAIRSSAQMISYEVSMGLVIITVLLTTGTLNLSEIIEAQRTMPWWIDLMLLPMGVVFFISVLAETNRLPFDLPEAESELVAGYNVEYSSMGFALFFLGEYANMILVSAMTTTFFLGGYLPPFNISWLDCIPGFFWFVFKVGFLLFCFLWIRATLPRYRYDQLMRLGWKVFLPLTLFWVVLVSSVLVYTDNLPSI.

9 helical membrane passes run Ile-9–Cys-29, Pro-50–Phe-70, Ile-82–Ile-102, Val-115–Gly-135, Met-161–Ile-181, Met-187–Leu-207, Met-235–Thr-255, Ile-275–Ile-295, and Gly-311–Val-331.

This sequence belongs to the complex I subunit 1 family. NDH-1 is composed of 14 different subunits. Subunits NuoA, H, J, K, L, M, N constitute the membrane sector of the complex.

It localises to the cell inner membrane. It carries out the reaction a quinone + NADH + 5 H(+)(in) = a quinol + NAD(+) + 4 H(+)(out). NDH-1 shuttles electrons from NADH, via FMN and iron-sulfur (Fe-S) centers, to quinones in the respiratory chain. The immediate electron acceptor for the enzyme in this species is believed to be ubiquinone. Couples the redox reaction to proton translocation (for every two electrons transferred, four hydrogen ions are translocated across the cytoplasmic membrane), and thus conserves the redox energy in a proton gradient. This subunit may bind ubiquinone. In Rickettsia peacockii (strain Rustic), this protein is NADH-quinone oxidoreductase subunit H.